Consider the following 70-residue polypeptide: Putative antitoxin VapB34 (70 aa).

In terms of biological role, antitoxin component of a possible type II toxin-antitoxin (TA) system. The cognate toxin is VapC34. This is Putative antitoxin VapB34 (vapB34) from Mycobacterium tuberculosis (strain CDC 1551 / Oshkosh).